The primary structure comprises 165 residues: AILTGVPYYILPSTSRAGFSPDNLRKNTSQLSCPLDLITQLRFPRRIGVPVIFTPQNSSLKVVPLSHNLNIHTCSDLWFCPESKIWTVKSSLTHGGSVVTTGGTFRSLGSWFRIERHGDSYKLVHCPRGSTPCRDVGIETVGGGGRRYLAPRDRPLAVRFTRASG.

2 N-linked (GlcNAc...) asparagine glycosylation sites follow: asparagine 27 and asparagine 57. 2 disulfide bridges follow: cysteine 33/cysteine 80 and cysteine 126/cysteine 133.

The protein belongs to the protease inhibitor I3 (leguminous Kunitz-type inhibitor) family. In terms of assembly, dimer.

Functionally, glucose and N-acetylglucosamine binding lectin. Has hemagglutinating activity against human and rabbit erythrocytes which does not require divalent cations. Inhibits factor Xa and, to a lesser extent, trypsin. Does not inhibit neutrophil elastase, human plasma kallikrein, papain, human plasmin, porcine pancreatic kallikrein and bovin chymotrypsin. Has insecticidal activity against the termite species N.corniger. Induces apoptosis in prostrate cancer cell lines DU145 and PC3. The sequence is that of Bark lectin isoform 2 from Crateva tapia (Garlic-pear tree).